Reading from the N-terminus, the 132-residue chain is Small ribosomal subunit protein uS11 (132 aa).

Belongs to the universal ribosomal protein uS11 family. As to quaternary structure, part of the 30S ribosomal subunit. Interacts with proteins S7 and S18. Binds to IF-3.

Located on the platform of the 30S subunit, it bridges several disparate RNA helices of the 16S rRNA. Forms part of the Shine-Dalgarno cleft in the 70S ribosome. This is Small ribosomal subunit protein uS11 from Chlamydia abortus (strain DSM 27085 / S26/3) (Chlamydophila abortus).